Consider the following 59-residue polypeptide: Conotoxin Bu1.2 (59 aa).

Residues 1 to 16 form the signal peptide; sequence MFTVFLLVVLATTVVS. Positions 17-42 are excised as a propeptide; that stretch reads FSTDDESDGSNEEPSADQAARSAMNR. Residues 18–43 are disordered; the sequence is STDDESDGSNEEPSADQAARSAMNRP. The segment covering 19-31 has biased composition (acidic residues); that stretch reads TDDESDGSNEEPS. Intrachain disulfides connect cysteine 46/cysteine 52 and cysteine 47/cysteine 57. Glycine 58 carries the glycine amide modification.

This sequence belongs to the conotoxin A superfamily. As to expression, expressed by the venom duct.

It localises to the secreted. The protein is Conotoxin Bu1.2 of Conus bullatus (Bubble cone).